The primary structure comprises 394 residues: LL-diaminopimelate aminotransferase (394 aa).

Residues Tyr-14 and Gly-41 each contribute to the substrate site. Residues Tyr-71, 104-105 (AK), Tyr-128, Asn-174, Tyr-205, and 233-235 (SFS) each bind pyridoxal 5'-phosphate. Residues Lys-105, Tyr-128, and Asn-174 each contribute to the substrate site. Lys-236 carries the N6-(pyridoxal phosphate)lysine modification. Positions 244 and 275 each coordinate pyridoxal 5'-phosphate. 2 residues coordinate substrate: Asn-275 and Arg-369.

This sequence belongs to the class-I pyridoxal-phosphate-dependent aminotransferase family. LL-diaminopimelate aminotransferase subfamily. Homodimer. The cofactor is pyridoxal 5'-phosphate.

It carries out the reaction (2S,6S)-2,6-diaminopimelate + 2-oxoglutarate = (S)-2,3,4,5-tetrahydrodipicolinate + L-glutamate + H2O + H(+). The protein operates within amino-acid biosynthesis; L-lysine biosynthesis via DAP pathway; LL-2,6-diaminopimelate from (S)-tetrahydrodipicolinate (aminotransferase route): step 1/1. Functionally, involved in the synthesis of meso-diaminopimelate (m-DAP or DL-DAP), required for both lysine and peptidoglycan biosynthesis. Catalyzes the direct conversion of tetrahydrodipicolinate to LL-diaminopimelate. Is also able to use meso-diaminopimelate, cystathionine, lysine or ornithine as substrates. The polypeptide is LL-diaminopimelate aminotransferase (Chlamydia trachomatis serovar D (strain ATCC VR-885 / DSM 19411 / UW-3/Cx)).